The primary structure comprises 180 residues: Lysine-specific demethylase 5C (180 aa).

Residues 116–159 (PEESLAYSSDAGEGAGHIPKVQGLLENGDSVTSPEKVATEEGSG) form a disordered region. Ser-148 carries the post-translational modification Phosphoserine.

Belongs to the JARID1 histone demethylase family. As to quaternary structure, part of two distinct complexes, one containing E2F6, and the other containing REST. Interacts with ZMYND8. Fe(2+) serves as cofactor.

The protein resides in the nucleus. It carries out the reaction N(6),N(6),N(6)-trimethyl-L-lysyl(4)-[histone H3] + 3 2-oxoglutarate + 3 O2 = L-lysyl(4)-[histone H3] + 3 formaldehyde + 3 succinate + 3 CO2. In terms of biological role, histone demethylase that specifically demethylates 'Lys-4' of histone H3, thereby playing a central role in histone code. Does not demethylate histone H3 'Lys-9', H3 'Lys-27', H3 'Lys-36', H3 'Lys-79' or H4 'Lys-20'. Demethylates trimethylated and dimethylated but not monomethylated H3 'Lys-4'. Participates in transcriptional repression of neuronal genes by recruiting histone deacetylases and REST at neuron-restrictive silencer elements. Represses the CLOCK-BMAL1 heterodimer-mediated transcriptional activation of the core clock component PER2. The protein is Lysine-specific demethylase 5C (KDM5C) of Cricetulus griseus (Chinese hamster).